The following is a 104-amino-acid chain: N(4)-acetylcytidine amidohydrolase (104 aa).

Residues 7–93 (MTFFSRFEAD…EVIQEIYPGI (87 aa)) enclose the ASCH domain. Catalysis depends on K22, which acts as the Proton acceptor. The Nucleophile role is filled by T25. E75 serves as the catalytic Proton donor.

It belongs to the N(4)-acetylcytidine amidohydrolase family.

It carries out the reaction N(4)-acetylcytidine + H2O = cytidine + acetate + H(+). The enzyme catalyses N(4)-acetyl-2'-deoxycytidine + H2O = 2'-deoxycytidine + acetate + H(+). It catalyses the reaction N(4)-acetylcytosine + H2O = cytosine + acetate + H(+). Functionally, catalyzes the hydrolysis of N(4)-acetylcytidine (ac4C). In Vibrio vulnificus (strain CMCP6), this protein is N(4)-acetylcytidine amidohydrolase.